The following is an 89-amino-acid chain: Small ribosomal subunit protein uS14 (89 aa).

Residues Cys-52, Cys-55, Cys-68, and Cys-71 each contribute to the Zn(2+) site.

The protein belongs to the universal ribosomal protein uS14 family. In terms of assembly, part of the 30S ribosomal subunit. Contacts proteins S3 and S10. Requires Zn(2+) as cofactor.

In terms of biological role, binds 16S rRNA, required for the assembly of 30S particles and may also be responsible for determining the conformation of the 16S rRNA at the A site. This is Small ribosomal subunit protein uS14 (rpsN) from Salinibacter ruber (strain DSM 13855 / M31).